The chain runs to 477 residues: 3-isopropylmalate dehydratase large subunit (477 aa).

[4Fe-4S] cluster contacts are provided by C351, C411, and C414.

This sequence belongs to the aconitase/IPM isomerase family. LeuC type 1 subfamily. As to quaternary structure, heterodimer of LeuC and LeuD. It depends on [4Fe-4S] cluster as a cofactor.

The catalysed reaction is (2R,3S)-3-isopropylmalate = (2S)-2-isopropylmalate. It participates in amino-acid biosynthesis; L-leucine biosynthesis; L-leucine from 3-methyl-2-oxobutanoate: step 2/4. Catalyzes the isomerization between 2-isopropylmalate and 3-isopropylmalate, via the formation of 2-isopropylmaleate. This Kineococcus radiotolerans (strain ATCC BAA-149 / DSM 14245 / SRS30216) protein is 3-isopropylmalate dehydratase large subunit.